Consider the following 718-residue polypeptide: Neutral ceramidase B (718 aa).

An N-terminal signal peptide occupies residues 1–20 (MINSFKKLIILISLVIILLS). Residues Asn224 and Asn252 are each glycosylated (N-linked (GlcNAc...) asparagine). Residue Ser298 is the Nucleophile of the active site. Residues Asn358, Asn378, Asn391, Asn421, Asn422, Asn577, Asn610, and Asn614 are each glycosylated (N-linked (GlcNAc...) asparagine).

It belongs to the neutral ceramidase family.

The protein localises to the secreted. It carries out the reaction an N-acylsphing-4-enine + H2O = sphing-4-enine + a fatty acid. Hydrolyzes the sphingolipid ceramide into sphingosine and free fatty acid. This Dictyostelium discoideum (Social amoeba) protein is Neutral ceramidase B (dcd2B).